Reading from the N-terminus, the 288-residue chain is NAD(P)H-hydrate epimerase (288 aa).

The N-terminal 48 residues, 1-48 (MSALRALLGLGLLAAGSRLRRVPGRAGACPAGSAWWEARRPHSGGGGE), are a transit peptide targeting the mitochondrion. The YjeF N-terminal domain maps to 65–275 (AQAVDEELFN…ALEKKYQLNL (211 aa)). Residue 119-123 (NNGGD) participates in (6S)-NADPHX binding. Position 120 (Asn-120) interacts with K(+). Lys-144 carries the post-translational modification N6-succinyllysine. Asp-185 is a K(+) binding site. (6S)-NADPHX contacts are provided by residues 189–195 (GFSFKGD) and Asp-218. Ser-221 is a binding site for K(+).

The protein belongs to the NnrE/AIBP family. Homodimer. Interacts with APOA1 and APOA2. Requires K(+) as cofactor. Undergoes physiological phosphorylation during sperm capacitation, downstream to PKA activation.

The protein resides in the mitochondrion. It is found in the secreted. The catalysed reaction is (6R)-NADHX = (6S)-NADHX. The enzyme catalyses (6R)-NADPHX = (6S)-NADPHX. Catalyzes the epimerization of the S- and R-forms of NAD(P)HX, a damaged form of NAD(P)H that is a result of enzymatic or heat-dependent hydration. This is a prerequisite for the S-specific NAD(P)H-hydrate dehydratase to allow the repair of both epimers of NAD(P)HX. Accelerates cholesterol efflux from endothelial cells to high-density lipoprotein (HDL) and thereby regulates angiogenesis. The sequence is that of NAD(P)H-hydrate epimerase from Canis lupus familiaris (Dog).